We begin with the raw amino-acid sequence, 376 residues long: MSQAELNGELFTLERFPPNAEEEALQAWEAADEYLLQQVNDVDGLTLIFNDGFGALACALAERNPVSINDSFISELATRHNLRMNGIDEESVRFQDSLSPLPAAPALVLIKVPKQLALLEQQLRALREVVTPETRIIAAAKARDVHNSTLALFEKILGTTTTSLAWKKARLIHCVFTAPELADAPQTYSWKLDGTPWTIHNHANVFARSGLDIGARFFLQHLPSDLEGEIADLGCGNGVIGLQALAQNPNARVMFTDESHMAVASSRLNVERNLPDDIARCEFMVNNSLSGIEPDRFTAILCNPPFHQQHAITDHIAWQMFNDARRSLKYGGELYVVGNRHLDYFRKLKRAFGNCTTIATNNKFVILKATKVRKQR.

This sequence belongs to the methyltransferase superfamily. RlmG family.

It is found in the cytoplasm. It catalyses the reaction guanosine(1835) in 23S rRNA + S-adenosyl-L-methionine = N(2)-methylguanosine(1835) in 23S rRNA + S-adenosyl-L-homocysteine + H(+). Functionally, specifically methylates the guanine in position 1835 (m2G1835) of 23S rRNA. In Klebsiella pneumoniae subsp. pneumoniae (strain ATCC 700721 / MGH 78578), this protein is Ribosomal RNA large subunit methyltransferase G.